Here is a 252-residue protein sequence, read N- to C-terminus: MRFDVITLFPEFLAQSAGLGVVGRAQEKGLFSLHGWNPRDYAEGNYRRVDDRPFGGGPGMVMLIEPLQACLQAIRDADPTPARVIHLSPQGAPLTQAKVRELAALPRMVLLCGRYEGIDERFLEANVDEEISLGDYVLSGGELGAAVIIDAVARLQDGALNDAESAAQDSFEGDLGLLDCPHYSQPAQHPLGDVPDVLRSGNHAAIAAWRRQQSLVRTAQRRPDLLDEQALGKADRTLLEQGRQVQKQKADP.

S-adenosyl-L-methionine-binding positions include G113 and 133–138 (LGDYVL).

Belongs to the RNA methyltransferase TrmD family. In terms of assembly, homodimer.

It localises to the cytoplasm. It catalyses the reaction guanosine(37) in tRNA + S-adenosyl-L-methionine = N(1)-methylguanosine(37) in tRNA + S-adenosyl-L-homocysteine + H(+). Specifically methylates guanosine-37 in various tRNAs. The chain is tRNA (guanine-N(1)-)-methyltransferase from Stenotrophomonas maltophilia (strain K279a).